We begin with the raw amino-acid sequence, 610 residues long: Glutamine--fructose-6-phosphate aminotransferase [isomerizing] (610 aa).

The active-site Nucleophile; for GATase activity is Cys2. The Glutamine amidotransferase type-2 domain maps to 2–218 (CGIVGAVAQR…EGDVAEMTRR (217 aa)). SIS domains are found at residues 286–426 (AAEI…QQQR) and 459–600 (LAED…VDQP). Lys605 (for Fru-6P isomerization activity) is an active-site residue.

In terms of assembly, homodimer.

It is found in the cytoplasm. It carries out the reaction D-fructose 6-phosphate + L-glutamine = D-glucosamine 6-phosphate + L-glutamate. Its function is as follows. Catalyzes the first step in hexosamine metabolism, converting fructose-6P into glucosamine-6P using glutamine as a nitrogen source. The protein is Glutamine--fructose-6-phosphate aminotransferase [isomerizing] of Vibrio cholerae serotype O1 (strain ATCC 39315 / El Tor Inaba N16961).